Here is a 355-residue protein sequence, read N- to C-terminus: Trans-3-hydroxy-L-proline dehydratase (355 aa).

Cysteine 111 (proton acceptor) is an active-site residue. Substrate is bound by residues 112-113 (GH) and 276-277 (GS).

The protein belongs to the proline racemase family. Homodimer.

It carries out the reaction trans-3-hydroxy-L-proline = 1-pyrroline-2-carboxylate + H2O. Catalyzes the dehydration of trans-3-hydroxy-L-proline (t3LHyp) to Delta(1)-pyrroline-2-carboxylate (Pyr2C). Together with LhpI, is involved in a metabolic pathway that converts t3LHyp to L-proline. The protein is Trans-3-hydroxy-L-proline dehydratase of Colwellia psychrerythraea (strain 34H / ATCC BAA-681) (Vibrio psychroerythus).